Consider the following 228-residue polypeptide: Potassium/proton antiporter CemA (228 aa).

A run of 3 helical transmembrane segments spans residues 6–26 (FIPLLYLTSIVFLPWWVSFSF), 113–133 (IICFVILSGYSFLVNEELFIL), and 188–208 (IISGLVSTFPVIFDTIFKYWI).

It belongs to the CemA family.

The protein localises to the plastid. It is found in the chloroplast inner membrane. The catalysed reaction is K(+)(in) + H(+)(out) = K(+)(out) + H(+)(in). In terms of biological role, contributes to K(+)/H(+) antiport activity by supporting proton efflux to control proton extrusion and homeostasis in chloroplasts in a light-dependent manner to modulate photosynthesis. Prevents excessive induction of non-photochemical quenching (NPQ) under continuous-light conditions. Indirectly promotes efficient inorganic carbon uptake into chloroplasts. In Populus alba (White poplar), this protein is Potassium/proton antiporter CemA.